Reading from the N-terminus, the 446-residue chain is Glutamine synthetase (446 aa).

Residues 18-103 (ENVRYLRLQF…LICDVYKTDG (86 aa)) form the GS beta-grasp domain. The GS catalytic domain occupies 110 to 446 (PRANLKRVLK…WERDQYMKQY (337 aa)). Mg(2+) is bound by residues Glu134 and Glu136. Glu186 lines the ATP pocket. Mg(2+) is bound by residues Glu191 and Glu198. L-glutamate-binding positions include 242–243 (NG) and Gly243. His247 is a binding site for Mg(2+). Residue Ser251 participates in ATP binding. The L-glutamate site is built by Arg300, Glu306, and Arg318. ATP-binding residues include Arg318 and Arg323. Residue Glu335 coordinates Mg(2+). Position 337 (Arg337) interacts with L-glutamate.

It belongs to the glutamine synthetase family. Oligomer of 12 subunits arranged in the form of two hexagons. In its feedback-inhibited form, interacts with TnrA in order to block its DNA-binding activity. It depends on Mg(2+) as a cofactor.

The protein resides in the cytoplasm. The enzyme catalyses L-glutamate + NH4(+) + ATP = L-glutamine + ADP + phosphate + H(+). With respect to regulation, inhibited by glutamine. Functionally, glutamine synthetase (GS) is an unusual multitasking protein that functions as an enzyme, a transcription coregulator, and a chaperone in ammonium assimilation and in the regulation of genes involved in nitrogen metabolism. It catalyzes the ATP-dependent biosynthesis of glutamine from glutamate and ammonia. Feedback-inhibited GlnA also interacts with and regulates the activity of the transcriptional regulator TnrA. During nitrogen limitation, TnrA is in its DNA-binding active state and turns on the transcription of genes required for nitrogen assimilation. Under conditions of nitrogen excess, feedback-inhibited GlnA forms a stable complex with TnrA, which inhibits its DNA-binding activity. In contrast, feedback-inhibited GlnA acts as a chaperone to stabilize the DNA-binding activity of GlnR, which represses the transcription of nitrogen assimilation genes. This is Glutamine synthetase from Staphylococcus aureus (strain MSSA476).